Reading from the N-terminus, the 352-residue chain is C-C chemokine receptor type 5 (352 aa).

The Extracellular portion of the chain corresponds to 1–30; sequence MDYQVSSPTYDIDYYTSEPCQKINVKQIAA. Tyr3 carries the post-translational modification Sulfotyrosine. O-linked (GalNAc...) serine glycans are attached at residues Ser6 and Ser7. A sulfotyrosine mark is found at Tyr10, Tyr14, and Tyr15. Cystine bridges form between Cys20-Cys269 and Cys101-Cys178. The helical transmembrane segment at 31–58 threads the bilayer; sequence RLLPPLYSLVFIFGFVGNILVVLILINC. The Cytoplasmic segment spans residues 59–68; sequence KRLKSMTDIY. A helical membrane pass occupies residues 69–89; the sequence is LLNLAISDLLFLLTVPFWAHY. Residues 90-102 lie on the Extracellular side of the membrane; it reads AAAQWDFGNIMCQ. Residues 103–124 traverse the membrane as a helical segment; the sequence is LLTGLYFIGFFSGIFFIILLTI. Residues 125-141 are Cytoplasmic-facing; it reads DRYLAIVHAVFALKART. A helical transmembrane segment spans residues 142 to 166; sequence VTFGVVTSVITWVVAVFASLPGIIF. Over 167 to 198 the chain is Extracellular; it reads TRSQREGLHYTCSSHFPYSQYQFWKNFRTLKI. The chain crosses the membrane as a helical span at residues 199–218; the sequence is VILGLVLPLLVMVICYSGIL. Over 219–235 the chain is Cytoplasmic; that stretch reads KTLLRCRNEKKRHRAVR. The helical transmembrane segment at 236-260 threads the bilayer; that stretch reads LIFTIMIVYFLFWAPYNIVLLLNTF. The Extracellular segment spans residues 261 to 277; sequence QEFFGLNNCSSSNRLDQ. A helical transmembrane segment spans residues 278–301; the sequence is AMQVTETLGMTHCCINPIIYAFVG. The Cytoplasmic portion of the chain corresponds to 302–352; the sequence is EKFRNYLLVFFQKHIAKRFCKCCSIFQQEAPERASSVYTRTTGEQEISVGL. 3 S-palmitoyl cysteine lipidation sites follow: Cys321, Cys323, and Cys324. Phosphoserine; by BARK1 occurs at positions 336, 337, and 349.

It belongs to the G-protein coupled receptor 1 family. Interacts with PRAF2. Efficient ligand binding to CCL3/MIP-1alpha and CCL4/MIP-1beta requires sulfation, O-glycosylation and sialic acid modifications. Glycosylation on Ser-6 is required for efficient binding of CCL4. Interacts with GRK2. Interacts with ARRB1 and ARRB2. Interacts with CNIH4. Interacts with S100A4; this interaction stimulates T-lymphocyte chemotaxis. In terms of processing, sulfated on at least 2 of the N-terminal tyrosines. Sulfation is required for efficient binding of the chemokines, CCL3 and CCL4. Post-translationally, palmitoylation in the C-terminal is important for cell surface expression. Phosphorylation on serine residues in the C-terminal is stimulated by binding CC chemokines especially by APO-RANTES. In terms of processing, O-glycosylated, but not N-glycosylated. Ser-6 appears to be the major site even if Ser-7 may be also O-glycosylated. Also sialylated glycans present which contribute to chemokine binding. Thr-16 and Ser-17 may also be glycosylated and, if so, with small moieties such as a T-antigen.

The protein resides in the cell membrane. Receptor for a number of inflammatory CC-chemokines including CCL3/MIP-1-alpha, CCL4/MIP-1-beta and RANTES and subsequently transduces a signal by increasing the intracellular calcium ion level. May play a role in the control of granulocytic lineage proliferation or differentiation. Participates in T-lymphocyte migration to the infection site by acting as a chemotactic receptor. In Mandrillus leucophaeus (Drill), this protein is C-C chemokine receptor type 5 (CCR5).